The following is a 166-amino-acid chain: Small ribosomal subunit protein uS9 (166 aa).

The segment at 135–166 (KKAGFLTRDPRATERKKYGLKKARKAPQYSKR) is disordered. Positions 142–151 (RDPRATERKK) are enriched in basic and acidic residues. Over residues 152–166 (YGLKKARKAPQYSKR) the composition is skewed to basic residues.

This sequence belongs to the universal ribosomal protein uS9 family.

The polypeptide is Small ribosomal subunit protein uS9 (Mycolicibacterium paratuberculosis (strain ATCC BAA-968 / K-10) (Mycobacterium paratuberculosis)).